We begin with the raw amino-acid sequence, 57 residues long: uncharacterized protein (57 aa).

A helical transmembrane segment spans residues 10–27 (FGLLWLIIGSEAFHLNAL). Positions 28–55 (KQDHLERMKQYDAKIRLAKHEFDDTSNE) form a coiled coil.

It localises to the membrane. This is an uncharacterized protein from Schizosaccharomyces pombe (strain 972 / ATCC 24843) (Fission yeast).